A 351-amino-acid chain; its full sequence is Prostaglandin reductase 2 (351 aa).

99–100 provides a ligand contact to substrate; it reads FY. NADP(+) contacts are provided by residues 165 to 168, Lys192, Tyr208, Asn231, 253 to 259, 287 to 289, and Asn337; these read GACG, CGQISQY, and FMV. 288 to 290 is a substrate binding site; that stretch reads MVL.

It belongs to the NADP-dependent oxidoreductase L4BD family. As to quaternary structure, monomer.

It localises to the cytoplasm. It catalyses the reaction 13,14-dihydro-15-oxo-prostaglandin E2 + NAD(+) = 15-oxoprostaglandin E2 + NADH + H(+). It carries out the reaction 13,14-dihydro-15-oxo-prostaglandin E2 + NADP(+) = 15-oxoprostaglandin E2 + NADPH + H(+). The enzyme catalyses 13,14-dihydro-15-oxo-PGF2alpha + NADP(+) = 15-oxoprostaglandin F2alpha + NADPH + H(+). The catalysed reaction is 13,14-dihydro-15-oxo-prostaglandin E1 + NADP(+) = 15-oxoprostaglandin E1 + NADPH + H(+). It catalyses the reaction 13,14-dihydro-15-oxo-prostaglandin F1alpha + NADP(+) = 15-oxoprostaglandin F1alpha + NADPH + H(+). Functionally, functions as 15-oxo-prostaglandin 13-reductase and acts on 15-keto-PGE1, 15-keto-PGE2, 15-keto-PGE1-alpha and 15-keto-PGE2-alpha with highest activity towards 15-keto-PGE2. Overexpression represses transcriptional activity of PPARG and inhibits adipocyte differentiation. The chain is Prostaglandin reductase 2 from Rattus norvegicus (Rat).